A 263-amino-acid chain; its full sequence is Polyglutamine-binding protein 1 (263 aa).

The WW domain maps to 46–80; sequence EGLPPSWYKVFDPSCGLPYYWNVDTDLVSWLSPHD. Position 94 is a phosphoserine (Ser94). The interval 94-263 is disordered; the sequence is SSNADAEEKL…AEASRTKQQD (170 aa). Residues 99–173 show a composition bias toward basic and acidic residues; the sequence is AEEKLDRSHE…DKVDREESKE (75 aa). 14 consecutive repeat copies span residues 104 to 110, 111 to 117, 118 to 124, 125 to 131, 132 to 138, 139 to 140, 141 to 142, 143 to 144, 150 to 151, 152 to 153, 154 to 155, 156 to 157, 158 to 159, and 160 to 161. The tract at residues 104 to 138 is 5 X 7 AA approximate tandem repeats of D-R-[SG]-H-D-K-S; the sequence is DRSHEKSDRGHEKSDRGHEKSDRSHEKSERNHEKS. The tract at residues 139–144 is 3 X 2 AA tandem repeats of [DE]-R; it reads DRDRER. The interval 150 to 161 is 6 X 2 AA tandem repeats of [DE]-R; the sequence is DRERERDRDRDR. Residues 243-253 are important for interaction with TXNL4A; that stretch reads YPSPGAVLRAN. Phosphoserine is present on Ser245.

In terms of assembly, interacts with POU3F2/Brn-2, ATXN1, TXNL4A, HTT and AR. Interaction with ATXN1 correlates positively with the length of the polyglutamine tract. Interacts with RNA polymerase II large subunit in a phosphorylation-dependent manner. Forms a ternary complex with ATXN1 mutant and phosphorylated RNA polymerase II. Interacts (via C-terminus) with TXNL4A and CD2BP2. Interacts (via WW domain) with ATN1 and SF3B1, and may interact with additional splice factors. Interacts (via WW domain) with WBP11; Leading to reduce interaction between PQBP1 and TXNL4A. Interacts with CAPRIN1. Interacts with DDX1. Interacts with SFPQ. Interacts with KHSRP.

It localises to the nucleus. Its subcellular location is the nucleus speckle. It is found in the cytoplasmic granule. Intrinsically disordered protein that acts as a scaffold, and which is involved in different processes, such as pre-mRNA splicing, transcription regulation, innate immunity and neuron development. Interacts with splicing-related factors via the intrinsically disordered region and regulates alternative splicing of target pre-mRNA species. May suppress the ability of POU3F2 to transactivate the DRD1 gene in a POU3F2 dependent manner. Can activate transcription directly or via association with the transcription machinery. May be involved in ATXN1 mutant-induced cell death. The interaction with ATXN1 mutant reduces levels of phosphorylated RNA polymerase II large subunit. Involved in the assembly of cytoplasmic stress granule, possibly by participating in the transport of neuronal RNA granules. Also acts as an innate immune sensor of infection by retroviruses, by detecting the presence of reverse-transcribed DNA in the cytosol. Directly binds retroviral reverse-transcribed DNA in the cytosol and interacts with CGAS, leading to activate the cGAS-STING signaling pathway, triggering type-I interferon production. In Bos taurus (Bovine), this protein is Polyglutamine-binding protein 1 (PQBP1).